Consider the following 395-residue polypeptide: NAD(P)H-quinone oxidoreductase subunit H, chloroplastic (395 aa).

Belongs to the complex I 49 kDa subunit family. As to quaternary structure, NDH is composed of at least 16 different subunits, 5 of which are encoded in the nucleus.

It localises to the plastid. The protein resides in the chloroplast thylakoid membrane. The enzyme catalyses a plastoquinone + NADH + (n+1) H(+)(in) = a plastoquinol + NAD(+) + n H(+)(out). The catalysed reaction is a plastoquinone + NADPH + (n+1) H(+)(in) = a plastoquinol + NADP(+) + n H(+)(out). Its function is as follows. NDH shuttles electrons from NAD(P)H:plastoquinone, via FMN and iron-sulfur (Fe-S) centers, to quinones in the photosynthetic chain and possibly in a chloroplast respiratory chain. The immediate electron acceptor for the enzyme in this species is believed to be plastoquinone. Couples the redox reaction to proton translocation, and thus conserves the redox energy in a proton gradient. The protein is NAD(P)H-quinone oxidoreductase subunit H, chloroplastic of Citrus sinensis (Sweet orange).